The sequence spans 273 residues: HTH-type transcriptional regulator NimR (273 aa).

Residues 158–258 (PKIRTMVEMM…GQTPGRYIAR (101 aa)) form the HTH araC/xylS-type domain. 2 consecutive DNA-binding regions (H-T-H motif) follow at residues 178-199 (GQWA…VKET) and 225-248 (VQKV…KKGL).

Its function is as follows. Negatively regulates expression of the nimT operon and its own expression. Acts by binding to the nimR-nimT intergenic region. In Escherichia coli (strain K12), this protein is HTH-type transcriptional regulator NimR.